Consider the following 345-residue polypeptide: Phosphoribosylformylglycinamidine cyclo-ligase (345 aa).

This sequence belongs to the AIR synthase family.

The protein resides in the cytoplasm. It carries out the reaction 2-formamido-N(1)-(5-O-phospho-beta-D-ribosyl)acetamidine + ATP = 5-amino-1-(5-phospho-beta-D-ribosyl)imidazole + ADP + phosphate + H(+). It functions in the pathway purine metabolism; IMP biosynthesis via de novo pathway; 5-amino-1-(5-phospho-D-ribosyl)imidazole from N(2)-formyl-N(1)-(5-phospho-D-ribosyl)glycinamide: step 2/2. The protein is Phosphoribosylformylglycinamidine cyclo-ligase of Prochlorococcus marinus (strain MIT 9211).